Here is a 411-residue protein sequence, read N- to C-terminus: MRFIEEFINKGYFHQCTDLDRLTAITKETKIAAYIGFDCTATSLHIGSLMQIMILRLLQQHGHKPIVIIGGGTSKIGDPTWKDEVRKILSKEDIAKNAEGIKKSLSKFIKFGDGKSDAIMLDNAEWLDSFNYLDFLRDFGSYFSVNRMLTMDSVKLRLEREQHLSFLEFNYMLLQAYDFYYLSKHYNCSLQLGGSDQWGNIVMGADLIRKISGKEVFGMTTPLLTTSSGAKMGKTAAGAVWLNEDLLSPYDYYQYWRNCEDADIVRFAKLYSEFTQEELNRFESLAAEDINAAKKQLAYELTKLCHSEQAAKSALETAVKIFEEGQIDENLPTVVLEQEVLQAGISAYELFHEAGLATSKSEARKLIRGNGAKINDRLVADENMIINTNFLLDKKVIKLSAGKKRHILVRV.

Position 34 (Tyr-34) interacts with L-tyrosine. Positions Cys-39–Ser-48 match the 'HIGH' region motif. The L-tyrosine site is built by Tyr-171 and Gln-175. The short motif at Lys-231 to Thr-235 is the 'KMSKS' region element. Residue Lys-234 participates in ATP binding. The S4 RNA-binding domain maps to Ile-345 to Val-411.

The protein belongs to the class-I aminoacyl-tRNA synthetase family. TyrS type 1 subfamily. As to quaternary structure, homodimer.

Its subcellular location is the cytoplasm. It catalyses the reaction tRNA(Tyr) + L-tyrosine + ATP = L-tyrosyl-tRNA(Tyr) + AMP + diphosphate + H(+). Its function is as follows. Catalyzes the attachment of tyrosine to tRNA(Tyr) in a two-step reaction: tyrosine is first activated by ATP to form Tyr-AMP and then transferred to the acceptor end of tRNA(Tyr). The chain is Tyrosine--tRNA ligase from Rickettsia peacockii (strain Rustic).